Reading from the N-terminus, the 181-residue chain is Immunity-related GTPase family M protein (181 aa).

The 150-residue stretch at 32 to 181 folds into the IRG-type G domain; the sequence is TPVNITMAGD…NLQKERVCEY (150 aa). Residues 41 to 48, 66 to 70, and 147 to 149 each bind GTP; these read DSGNGMST, TELVK, and KLD.

It belongs to the TRAFAC class dynamin-like GTPase superfamily. IRG family. Interacts with ULK1; promoting the coassembly of ULK1 and BECN1. Interacts with BECN1; enhancing BECN1-interacting partners and influencing the composition of the BECN1 complex. Interacts with ATG16L1. Interacts with NOD2; promoting IRGM 'Lys-63'-linked polyubiquitination, which is required for interactions with the core autophagy factors. Interacts with STX17; promoting STX17 recruitment to autophagosomes. Interacts with ATG8 proteins (GABARAP, GABARAPL1, GABARAPL2, MAP1LC3A, MAP1LC3B and MAP1LC3C); promoting STX17 recruitment to autophagosomes. Interacts with TFEB; promoting association between TFEB and PPP3CB and TFEB dephosphorylation. Interacts with PPP3CB; promoting association between TFEB and PPP3CB and TFEB dephosphorylation. Interacts with NLRP3; preventing NLRP3 inflammasome assembly and promoting SQSTM1/p62-dependent autophagic degradation of NLRP3. Interacts with CGAS; promoting SQSTM1/p62-dependent autophagic degradation of CGAS. Interacts with RIGI/RIG-I; promoting SQSTM1/p62-dependent autophagic degradation of RIGI/RIG-I. Interacts with NOD1; promoting SQSTM1/p62-dependent autophagic degradation of RIGI/RIG-I. Interacts with NOD2; promoting SQSTM1/p62-dependent autophagic degradation of RIGI/RIG-I. Interacts with RIPK2; promoting SQSTM1/p62-dependent autophagic degradation of RIGI/RIG-I. Post-translationally, ubiquitinated via 'Lys-63'-linked polyubiquitination in a NOD2-dependent process. 'Lys-63'-linked polyubiquitination is required for interactions with the core autophagy factors. Widely expressed (at protein level). Expressed in several tissues including colon, small bowel and peripheral blood leukocytes.

It is found in the golgi apparatus membrane. The protein localises to the cell membrane. The protein resides in the cytoplasmic vesicle. It localises to the phagosome membrane. Its subcellular location is the autophagosome membrane. It is found in the lysosome membrane. The protein localises to the late endosome membrane. The protein resides in the mitochondrion membrane. It localises to the cell projection. Its subcellular location is the phagocytic cup. It is found in the mitochondrion. It carries out the reaction GTP + H2O = GDP + phosphate + H(+). In terms of biological role, immunity-related GTPase that plays important roles in innate immunity and inflammatory response. Acts as a dynamin-like protein that binds to intracellular membranes and promotes remodeling and trafficking of those membranes. Required for clearance of acute protozoan and bacterial infections by interacting with autophagy and lysosome regulatory proteins, thereby promoting the fusion of phagosomes with lysosomes for efficient degradation of cargo including microbes. Regulates selective autophagy, including xenophagy and mitophagy, both directly and indirectly. Directly regulates autophagy by acting as a molecular adapter that promotes the coassembly of the core autophagy machinery to mediate antimicrobial defense: IRGM (1) activates AMPK, which in turn phosphorylates ULK1 and BECN1 to induce autophagy, (2) promotes the coassembly of ULK1 and BECN1, enhancing BECN1-interacting partners and (3) influences the composition of the BECN1 complex, by competing with the negative regulators BCL2 and RUBCN, to trigger autophagy. Also activates autophagy by promoting recruitment of STX17 to autophagosomes. In collaboration with ATG8 proteins, regulate lysosomal biogenesis, a fundamental process for any autophagic pathway, by promoting TFEB dephosphorylation. Also modulates autophagy by assisting with autophagosome formation and preventing lysosomal deacidification. While activating autophagy, acts as a key negative regulator of the inflammatory and interferon responses both by (1) promoting mitophagy and (2) mediating autophagy-dependent degradation of effectors of the inflammatory response. Promotes degradation of damaged and IFNG/IFN-gamma-stressed mitochondria via mitophagy, preventing cytosolic release of ligands that activate inflammation. Acts as a suppressor of inflammation by promoting recruitment of inflammation effectors, such as CGAS, RIGI/RIG-I and NLRP3, to autophagosome membranes, leading to their SQSTM1/p62-dependent autophagic degradation. Also directly inhibits assembly of the NLRP3 inflammasome by preventing the association between NLRP3 and PYCARD. Acts as a negative regulator of antiviral innate immune response by suppressing the RIPK2-dependent pro-inflammatory response: mediates recruitment of RIPosomes, composed of RIPK2 and NOD1 or NOD2, to autophagosome membranes, promoting their SQSTM1/p62-dependent autophagic degradation. Acts as a positive regulator of mitophagy in response to intracellular mycobacteria infection: specifically binds cardiolipin, leading to its translocation to mitochondria, where it promotes affected mitochondrial fission and mitophagy. Its function is as follows. (Microbial infection) Following infection by hepatitis C virus (HCV), promotes HCV-triggered membrane remodeling, leading to autophagy and Golgi fragmentation, a step required for HCV replication. This Homo sapiens (Human) protein is Immunity-related GTPase family M protein.